The sequence spans 967 residues: Glutamate receptor 2.6 (967 aa).

The first 31 residues, 1-31 (MSLFNHLLSRALPLWLLFFINFLVLLGKSQQ), serve as a signal peptide directing secretion. At 32–590 (EVLQVQVGIV…WVFLKPLTRE (559 aa)) the chain is on the extracellular side. Residues N45, N57, N121, N336, N345, N424, and N550 are each glycosylated (N-linked (GlcNAc...) asparagine). The chain crosses the membrane as a helical span at residues 591–611 (LWFLTAASFLYIGIMVWIFEY). Residues 612–621 (QASGDFRKQS) lie on the Cytoplasmic side of the membrane. The chain crosses the membrane as a helical span at residues 622–642 (IINKISNVFYFSFSTLFFAHM). The Cytoplasmic segment spans residues 643-651 (RPSESIFTR). The chain crosses the membrane as a helical span at residues 652–672 (VLVVVWCFVLLILTQSYTATL). Topologically, residues 673 to 832 (TSMLTVQELR…DSPIRLDHHS (160 aa)) are extracellular. N795 carries an N-linked (GlcNAc...) asparagine glycan. A helical transmembrane segment spans residues 833–853 (FEALFTIVFVVSMLLLLAMLV). The Cytoplasmic portion of the chain corresponds to 854-967 (CRRYRQESKS…AALFSRIKSA (114 aa)). Positions 864–874 (GEINANNSPTD) are enriched in polar residues. The interval 864-913 (GEINANNSPTDGNMRAPPNQPTDDNMRAPTSPPIDDQVLEPPGPALNEAD) is disordered.

The protein belongs to the glutamate-gated ion channel (TC 1.A.10.1) family. As to quaternary structure, may form heteromers. As to expression, expressed predominantly in roots.

The protein localises to the membrane. Glutamate-gated receptor that probably acts as a non-selective cation channel. May be involved in light-signal transduction and calcium homeostasis via the regulation of calcium influx into cells. This is Glutamate receptor 2.6 (GLR2.6) from Arabidopsis thaliana (Mouse-ear cress).